A 138-amino-acid polypeptide reads, in one-letter code: Large ribosomal subunit protein bL17 (138 aa).

Belongs to the bacterial ribosomal protein bL17 family. Part of the 50S ribosomal subunit. Contacts protein L32.

This chain is Large ribosomal subunit protein bL17, found in Halorhodospira halophila (strain DSM 244 / SL1) (Ectothiorhodospira halophila (strain DSM 244 / SL1)).